The following is a 165-amino-acid chain: Leukotoxin-activating lysine-acyltransferase LktC (165 aa).

Catalysis depends on residues H22 and D91.

Belongs to the RTX toxin acyltransferase family.

It localises to the cytoplasm. The catalysed reaction is a fatty acyl-[ACP] + L-lysyl-[protein] = N(6)-(fatty acyl)-L-lysyl-[protein] + holo-[ACP] + H(+). In terms of biological role, involved in fatty acylation of the protoxin (LktA) at two internal lysine residues, thereby converting it to the active toxin. This chain is Leukotoxin-activating lysine-acyltransferase LktC (lktC), found in Pasteurella haemolytica-like sp. (strain 5943B).